A 259-amino-acid polypeptide reads, in one-letter code: Adenosylcobinamide-GDP ribazoletransferase (259 aa).

The next 7 membrane-spanning stretches (helical) occupy residues 36–56 (FSPL…ILLL), 65–85 (MPFI…VDGL), 108–128 (IGAS…AALF), 133–153 (LILF…IWAI), 175–195 (GFLI…FILI), 201–221 (IIST…ALII), and 238–258 (GASV…ILPA).

This sequence belongs to the CobS family. It depends on Mg(2+) as a cofactor.

The protein resides in the cell inner membrane. The catalysed reaction is alpha-ribazole + adenosylcob(III)inamide-GDP = adenosylcob(III)alamin + GMP + H(+). The enzyme catalyses alpha-ribazole 5'-phosphate + adenosylcob(III)inamide-GDP = adenosylcob(III)alamin 5'-phosphate + GMP + H(+). The protein operates within cofactor biosynthesis; adenosylcobalamin biosynthesis; adenosylcobalamin from cob(II)yrinate a,c-diamide: step 7/7. Its function is as follows. Joins adenosylcobinamide-GDP and alpha-ribazole to generate adenosylcobalamin (Ado-cobalamin). Also synthesizes adenosylcobalamin 5'-phosphate from adenosylcobinamide-GDP and alpha-ribazole 5'-phosphate. The sequence is that of Adenosylcobinamide-GDP ribazoletransferase from Prochlorococcus marinus (strain SARG / CCMP1375 / SS120).